Consider the following 380-residue polypeptide: MYLRSLHLRHFRNYRDQEITFDAPKTILVGENAQGKTNLLEAVELLATLRSRRASRDRELVYQEERQAQIAATVERLGVAHELVMELRSSGRRSLKVDGQVLRRQADFLGQVNAVVFSSLDLELVRGGPEARRNWLDGVLLQLEPAYLGLVEQYRQILRQRNALLKQDPAAAGDKFSQMDFWDAQLATTGSRIMRRRARLLQRLEPLAAHWHRVISGGRETLTLTYRPQVPLPDPQASPEVIQAQFLAEIRAKAAAEHSLGSSLVGPHRDEVELCINGVAARAYGSQGQQRTLVLALKLAELELIEQVVRDPPLLLLDDVLAELDLHRQNQLLEAIQERVQTLVTTTHLGSFDAGWLKAAQILQVQGGQLFPSKTGDGIP.

ATP is bound at residue 30-37 (GENAQGKT).

Belongs to the RecF family.

It localises to the cytoplasm. Its function is as follows. The RecF protein is involved in DNA metabolism; it is required for DNA replication and normal SOS inducibility. RecF binds preferentially to single-stranded, linear DNA. It also seems to bind ATP. This Synechococcus sp. (strain JA-2-3B'a(2-13)) (Cyanobacteria bacterium Yellowstone B-Prime) protein is DNA replication and repair protein RecF.